Reading from the N-terminus, the 60-residue chain is Andropin (60 aa).

A signal peptide spans 1–23; sequence MKYFVVLVVLALILAIAVGPSDA.

It belongs to the andropin family. As to expression, ejaculatory duct of adult males.

It is found in the secreted. Its function is as follows. Male-specific peptide with moderate activity against Gram-positive bacteria. This is Andropin (Anp) from Drosophila simulans (Fruit fly).